A 614-amino-acid chain; its full sequence is RNA polymerase sigma factor RpoD (614 aa).

The interval 178–222 (THIGSDLSQSERDKDDSKDDSKDDDEDEEEEGPKGPDPEESKERF) is disordered. Residues 186 to 198 (QSERDKDDSKDDS) are compositionally biased toward basic and acidic residues. The span at 199 to 208 (KDDDEDEEEE) shows a compositional bias: acidic residues. The segment covering 209 to 222 (GPKGPDPEESKERF) has biased composition (basic and acidic residues). Residues 380–450 (MVEANLRLVI…TRSIADQART (71 aa)) form a sigma-70 factor domain-2 region. The Interaction with polymerase core subunit RpoC motif lies at 404–407 (DLIQ). The interval 459–535 (ETINKLNRIS…DTTLELPLDS (77 aa)) is sigma-70 factor domain-3. The interval 548–601 (VLAGLTAREAKVLRMRFGIDMNTDHTLEEVGKQFDVTRERIRQIEAKALRKLRH) is sigma-70 factor domain-4. The H-T-H motif DNA-binding region spans 574 to 593 (LEEVGKQFDVTRERIRQIEA).

The protein belongs to the sigma-70 factor family. RpoD/SigA subfamily. Interacts transiently with the RNA polymerase catalytic core.

The protein resides in the cytoplasm. In terms of biological role, sigma factors are initiation factors that promote the attachment of RNA polymerase to specific initiation sites and are then released. This sigma factor is the primary sigma factor during exponential growth. This is RNA polymerase sigma factor RpoD from Shewanella violacea (strain JCM 10179 / CIP 106290 / LMG 19151 / DSS12).